We begin with the raw amino-acid sequence, 519 residues long: Putative tyrosine carboxypeptidase MATCAP2 (519 aa).

Residues 63-103 form a disordered region; it reads SKEEKKHRSQKRFSSASSKQHRKPSKSPSSSHSKDPSRMTA. Residue His330 coordinates Zn(2+). Catalysis depends on Glu331, which acts as the Nucleophile. His335 and Glu366 together coordinate Zn(2+).

It depends on Zn(2+) as a cofactor.

Functionally, putative tyrosine carboxypeptidase. The sequence is that of Putative tyrosine carboxypeptidase MATCAP2 from Mus musculus (Mouse).